Reading from the N-terminus, the 138-residue chain is Nucleoside diphosphate kinase (138 aa).

The ATP site is built by lysine 10, phenylalanine 58, arginine 86, threonine 92, arginine 103, and asparagine 113. Histidine 116 acts as the Pros-phosphohistidine intermediate in catalysis.

The protein belongs to the NDK family. As to quaternary structure, homotetramer. Requires Mg(2+) as cofactor.

The protein resides in the cytoplasm. It carries out the reaction a 2'-deoxyribonucleoside 5'-diphosphate + ATP = a 2'-deoxyribonucleoside 5'-triphosphate + ADP. The catalysed reaction is a ribonucleoside 5'-diphosphate + ATP = a ribonucleoside 5'-triphosphate + ADP. In terms of biological role, major role in the synthesis of nucleoside triphosphates other than ATP. The ATP gamma phosphate is transferred to the NDP beta phosphate via a ping-pong mechanism, using a phosphorylated active-site intermediate. The polypeptide is Nucleoside diphosphate kinase (Haemophilus ducreyi (strain 35000HP / ATCC 700724)).